A 304-amino-acid polypeptide reads, in one-letter code: N-acetyl-D-glucosamine kinase (304 aa).

Residues 4-11 and 133-140 contribute to the ATP site; these read GFDMGGTK and GVGGGLIV. Residues His157, Cys177, Cys179, and Cys184 each coordinate Zn(2+).

Belongs to the ROK (NagC/XylR) family. NagK subfamily.

It catalyses the reaction N-acetyl-D-glucosamine + ATP = N-acetyl-D-glucosamine 6-phosphate + ADP + H(+). The protein operates within cell wall biogenesis; peptidoglycan recycling. Its function is as follows. Catalyzes the phosphorylation of N-acetyl-D-glucosamine (GlcNAc) derived from cell-wall degradation, yielding GlcNAc-6-P. This is N-acetyl-D-glucosamine kinase from Yersinia pseudotuberculosis serotype O:1b (strain IP 31758).